Consider the following 246-residue polypeptide: Sortase B (246 aa).

A helical membrane pass occupies residues 5-24; it reads SFLGKSLTLVVLGVFLFSGW.

Belongs to the bacterial sortase family. Class B subfamily.

The protein localises to the cell membrane. Its function is as follows. Transpeptidase that anchors surface proteins to the cell wall. Recognizes and modifies its substrate by proteolytic cleavage of a C-terminal sorting signal. Following cleavage, a covalent intermediate is formed via a thioester bond between the sortase and its substrate, which is then transferred and covalently attached to the cell wall. Catalyzes a cell wall sorting reaction in which a surface protein with the consensus sorting signal NP(Q/K)(T/S)(N/G/S)(D/A) is cleaved between the fourth and fifth residues, and the fourth position is linked to the cell wall. This is not the major sortase in Listeria, it seems to anchor only 2 proteins, Hbp2 (SvpA) and Hbp1. This Listeria monocytogenes serovar 1/2a (strain ATCC BAA-679 / EGD-e) protein is Sortase B.